A 100-amino-acid chain; its full sequence is Probable DNA-binding protein HU (100 aa).

This sequence belongs to the bacterial histone-like protein family.

Functionally, histone-like DNA-binding protein which is capable of wrapping DNA to stabilize it, and thus to prevent its denaturation under extreme environmental conditions. This chain is Probable DNA-binding protein HU (hup), found in Chlamydia muridarum (strain MoPn / Nigg).